We begin with the raw amino-acid sequence, 247 residues long: Pulmonary surfactant-associated protein A (247 aa).

The first 15 residues, 1–15, serve as a signal peptide directing secretion; sequence MLLLSLALTLISAPA. In terms of domain architecture, Collagen-like spans 27–99; it reads GSPGIPGTPG…PGERGPPGLP (73 aa). Proline 29, proline 32, proline 35, proline 41, proline 53, proline 56, proline 62, proline 66, and proline 69 each carry 4-hydroxyproline. Residues 30 to 100 are disordered; that stretch reads GIPGTPGSHG…GERGPPGLPA (71 aa). Residues 41-50 show a composition bias toward basic and acidic residues; sequence PGRDGRDGVK. Residues 53 to 64 show a composition bias toward pro residues; that stretch reads PGPPGPMGPPGG. The span at 83 to 92 shows a compositional bias: basic and acidic residues; sequence ERGDKGEPGE. Residues 132-247 enclose the C-type lectin domain; the sequence is AVGEKIFSTN…LQYRLVICEF (116 aa). 2 disulfides stabilise this stretch: cysteine 154-cysteine 245 and cysteine 223-cysteine 237. The N-linked (GlcNAc...) asparagine glycan is linked to asparagine 206. Ca(2+) contacts are provided by glutamate 214, arginine 216, asparagine 233, and aspartate 234.

The protein belongs to the SFTPA family. In terms of assembly, oligomeric complex of 6 set of homotrimers.

It is found in the secreted. Its subcellular location is the extracellular space. It localises to the extracellular matrix. The protein resides in the surface film. In terms of biological role, in presence of calcium ions, it binds to surfactant phospholipids and contributes to lower the surface tension at the air-liquid interface in the alveoli of the mammalian lung and is essential for normal respiration. Enhances the expression of MYO18A/SP-R210 on alveolar macrophages. The chain is Pulmonary surfactant-associated protein A (SFTPA1) from Oryctolagus cuniculus (Rabbit).